We begin with the raw amino-acid sequence, 326 residues long: Ras association domain-containing protein 2 (326 aa).

The Ras-associating domain maps to 176-264 (YNHKTSVFTP…SKVFLMEKDQ (89 aa)). An SARAH domain is found at 272–319 (VAQYIKFEMPVLKSFIQKLQEEEDREVEKLMRKYTVLRLMIRQRLEEI).

Interacts directly with activated KRAS in a GTP-dependent manner. Interacts (via SARAH domain) with STK3/MST2 and STK4/MST1. Post-translationally, phosphorylated by STK3/MST2 and STK4/MST1.

Its subcellular location is the nucleus. The protein resides in the cytoplasm. It is found in the chromosome. The protein localises to the centromere. It localises to the kinetochore. Functionally, potential tumor suppressor. Acts as a KRAS-specific effector protein. May promote apoptosis and cell cycle arrest. Stabilizes STK3/MST2 by protecting it from proteasomal degradation. This is Ras association domain-containing protein 2 (Rassf2) from Mus musculus (Mouse).